The following is a 450-amino-acid chain: MNSPWKAEASRIALVSLGCDKNRVDGEVMLGLLERAGYQITAELEADIILVNTCAFIQDAKQESIEAILETARYRGNGRCRVLLATGCLAQRYPDELLRDIPELDGVVGTGEVGRVVDIVRRAATGERVREVGPPGFLGREVLPRVPSGSPFTAYLKISEGCDNRCLYCVIPQLRGPYRSREASVLVREARALAARGAREIVLVAQDTTRYGSDLKERTSLTDLVSRLAALEGVAWIRLLYCYPSGITFELVELMAREPRLCRYLDIPLQHASDRVLRRMGRSTMSYDLRKLILFLRSAIPGLTIRSTFMVGFPGETEADFEELLGFLKAMKLDRAGFFAYSREEGTPAARMPDQVPPEVKRERLERAAAVQREVSRALNRARVGSEVTVLVEGRKGEQYYGRSEADAPDIDGRVFLSAASDLEPGTFVRARITGAGPYDLRARVLSTLP.

The MTTase N-terminal domain maps to 10-125; the sequence is SRIALVSLGC…VVDIVRRAAT (116 aa). Positions 19, 54, 88, 162, 166, and 169 each coordinate [4Fe-4S] cluster. The Radical SAM core domain maps to 148-378; sequence SGSPFTAYLK…AAVQREVSRA (231 aa). The 67-residue stretch at 381–447 folds into the TRAM domain; the sequence is RARVGSEVTV…PYDLRARVLS (67 aa).

It belongs to the methylthiotransferase family. RimO subfamily. [4Fe-4S] cluster serves as cofactor.

It is found in the cytoplasm. The enzyme catalyses L-aspartate(89)-[ribosomal protein uS12]-hydrogen + (sulfur carrier)-SH + AH2 + 2 S-adenosyl-L-methionine = 3-methylsulfanyl-L-aspartate(89)-[ribosomal protein uS12]-hydrogen + (sulfur carrier)-H + 5'-deoxyadenosine + L-methionine + A + S-adenosyl-L-homocysteine + 2 H(+). In terms of biological role, catalyzes the methylthiolation of an aspartic acid residue of ribosomal protein uS12. The chain is Ribosomal protein uS12 methylthiotransferase RimO from Desulforudis audaxviator (strain MP104C).